The sequence spans 139 residues: ATP synthase epsilon chain (139 aa).

Belongs to the ATPase epsilon chain family. As to quaternary structure, F-type ATPases have 2 components, CF(1) - the catalytic core - and CF(0) - the membrane proton channel. CF(1) has five subunits: alpha(3), beta(3), gamma(1), delta(1), epsilon(1). CF(0) has three main subunits: a, b and c.

The protein resides in the cell inner membrane. Produces ATP from ADP in the presence of a proton gradient across the membrane. This chain is ATP synthase epsilon chain, found in Acinetobacter baylyi (strain ATCC 33305 / BD413 / ADP1).